The following is a 294-amino-acid chain: Chelated iron transport system membrane protein YfeC (294 aa).

8 helical membrane-spanning segments follow: residues 17–37, 51–71, 93–113, 140–160, 169–189, 194–214, 221–241, and 246–266; these read AIWV…YLML, VVPG…GAFF, AIIG…VSLN, IIIL…LAVF, IGLS…ACTV, TVGA…AYLL, LLII…YLSF, and ATGG…FFFA.

This sequence belongs to the ABC-3 integral membrane protein family.

It is found in the cell inner membrane. In terms of biological role, part of an ATP-driven transport system YfeABC for chelated iron. In Yersinia pestis, this protein is Chelated iron transport system membrane protein YfeC (yfeC).